Reading from the N-terminus, the 186-residue chain is Ribosome-recycling factor (186 aa).

It belongs to the RRF family.

It is found in the cytoplasm. Functionally, responsible for the release of ribosomes from messenger RNA at the termination of protein biosynthesis. May increase the efficiency of translation by recycling ribosomes from one round of translation to another. The sequence is that of Ribosome-recycling factor from Porphyromonas gingivalis (strain ATCC BAA-308 / W83).